A 308-amino-acid polypeptide reads, in one-letter code: Microtubule integrity protein mal3 (308 aa).

One can recognise a Calponin-homology (CH) domain in the interval 2–103; that stretch reads SESRQELLAW…FVQWAKRFWD (102 aa). Residues 117 to 162 form a disordered region; the sequence is RGNRGPANTRVMNSSAGATGPSRRRQVSSGSSTPSMTKSSANNNNV. Residues 144 to 162 show a composition bias toward low complexity; the sequence is SSGSSTPSMTKSSANNNNV. Residues 173-247 enclose the EB1 C-terminal domain; it reads RAKQAQQQIT…LYSTEDGFEL (75 aa).

It belongs to the MAPRE family. In terms of assembly, interacts with tea2.

Its subcellular location is the cytoplasm. The protein localises to the cytoskeleton. In terms of biological role, may play a role in regulating the integrity of microtubules possibly by influencing their stability. Involved in an anchoring mechanism to maintain tea2 and tip1 at growing microtubule ends. Strongly stimulates the ATPase activity of tea2. The protein is Microtubule integrity protein mal3 (mal3) of Schizosaccharomyces pombe (strain 972 / ATCC 24843) (Fission yeast).